Here is a 186-residue protein sequence, read N- to C-terminus: uncharacterized protein (186 aa).

The next 3 helical transmembrane spans lie at 43-63, 69-89, and 143-163; these read GAWV…HAIP, LAWT…FHWV, and WMFL…LPAV.

It is found in the endoplasmic reticulum membrane. This is an uncharacterized protein from Schizosaccharomyces pombe (strain 972 / ATCC 24843) (Fission yeast).